Consider the following 397-residue polypeptide: Protein Rep52 (397 aa).

Residues 84-239 (DPQYAASVFL…LDHDFGKVTK (156 aa)) form the SF3 helicase domain. 110 to 117 (GPATTGKT) is a binding site for ATP. Positions 265 to 296 (GGAKKRPAPSDADISEPKRVRESVAQPSTSDA) are disordered.

As to quaternary structure, homooligomer. Interacts with host PRKX.

The protein localises to the host nucleus. Its function is as follows. Plays a critical role during packaging of viral DNA into empty capsids, where they are thought to be part of the packaging motor complex. The single stranded genomic DNA is packaged in a 3' to 5' direction and requires the association between viral DNA and Rep40. Regulates host PKA activity by interacting with host PRKX as a mechanism to interfere with helper virus propagation and to promote its own replication. This chain is Protein Rep52 (Rep52), found in Mammalia (AAV-2).